A 122-amino-acid polypeptide reads, in one-letter code: Large ribosomal subunit protein uL14 (122 aa).

The protein belongs to the universal ribosomal protein uL14 family. In terms of assembly, part of the 50S ribosomal subunit. Forms a cluster with proteins L3 and L19. In the 70S ribosome, L14 and L19 interact and together make contacts with the 16S rRNA in bridges B5 and B8.

Binds to 23S rRNA. Forms part of two intersubunit bridges in the 70S ribosome. The protein is Large ribosomal subunit protein uL14 of Fusobacterium nucleatum subsp. nucleatum (strain ATCC 25586 / DSM 15643 / BCRC 10681 / CIP 101130 / JCM 8532 / KCTC 2640 / LMG 13131 / VPI 4355).